Reading from the N-terminus, the 352-residue chain is Thrombopoietin (352 aa).

A signal peptide spans 1–23; it reads MELTELLLVVMLLLTARLDPCLP. 2 disulfide bridges follow: Cys-28/Cys-172 and Cys-50/Cys-106. 5 N-linked (GlcNAc...) asparagine glycosylation sites follow: Asn-185, Asn-197, Asn-206, Asn-234, and Asn-255. Over residues 233 to 245 the composition is skewed to polar residues; it reads LNQTSRSLNQTPG. Disordered stretches follow at residues 233–259 and 292–352; these read LNQTSRSLNQTPGHLSRTHGPLNGTHG and YSPS…SQEE. A compositionally biased stretch (pro residues) spans 311–327; the sequence is PTSPTPQNPLQPPPPDP. N-linked (GlcNAc...) asparagine glycosylation is found at Asn-332 and Asn-347.

The protein belongs to the EPO/TPO family.

The protein resides in the secreted. Lineage-specific cytokine affecting the proliferation and maturation of megakaryocytes from their committed progenitor cells. It acts at a late stage of megakaryocyte development. It may be the major physiological regulator of circulating platelets. The sequence is that of Thrombopoietin (THPO) from Canis lupus familiaris (Dog).